A 558-amino-acid chain; its full sequence is Methionine--tRNA ligase 1 (558 aa).

Residues 10-20 (PYINGIKHLGN) carry the 'HIGH' region motif. Zn(2+) is bound by residues Cys-142, Cys-145, Cys-155, and Cys-158. The 'KMSKS' region motif lies at 332-336 (KFSTS). Thr-335 serves as a coordination point for ATP.

Belongs to the class-I aminoacyl-tRNA synthetase family. MetG type 1 subfamily. Monomer. The cofactor is Zn(2+).

The protein localises to the cytoplasm. The enzyme catalyses tRNA(Met) + L-methionine + ATP = L-methionyl-tRNA(Met) + AMP + diphosphate. Its function is as follows. Is required not only for elongation of protein synthesis but also for the initiation of all mRNA translation through initiator tRNA(fMet) aminoacylation. The protein is Methionine--tRNA ligase 1 of Acaryochloris marina (strain MBIC 11017).